We begin with the raw amino-acid sequence, 92 residues long: Small ribosomal subunit protein uS19 (92 aa).

Belongs to the universal ribosomal protein uS19 family.

In terms of biological role, protein S19 forms a complex with S13 that binds strongly to the 16S ribosomal RNA. This Corynebacterium jeikeium (strain K411) protein is Small ribosomal subunit protein uS19.